Here is a 701-residue protein sequence, read N- to C-terminus: Glycine--tRNA ligase beta subunit (701 aa).

The protein belongs to the class-II aminoacyl-tRNA synthetase family. Tetramer of two alpha and two beta subunits.

The protein localises to the cytoplasm. The catalysed reaction is tRNA(Gly) + glycine + ATP = glycyl-tRNA(Gly) + AMP + diphosphate. The protein is Glycine--tRNA ligase beta subunit of Thiobacillus denitrificans (strain ATCC 25259 / T1).